The following is a 107-amino-acid chain: High mobility group protein HMG-I/HMG-Y (107 aa).

The interval 1–107 (MSESSSKSSQ…ISQESSEEEQ (107 aa)) is disordered. An N-acetylserine modification is found at Ser2. Lys7 is modified (N6-acetyllysine). An ADP-ribosylserine modification is found at Ser8. The residue at position 9 (Ser9) is an ADP-ribosylserine; alternate. The residue at position 9 (Ser9) is a Phosphoserine; alternate. Lys15 bears the N6-acetyllysine; alternate mark. Residue Lys15 forms a Glycyl lysine isopeptide (Lys-Gly) (interchain with G-Cter in SUMO2); alternate linkage. Basic and acidic residues predominate over residues 15–24 (KQEKDGTEKR). Positions 21–31 (TEKRGRGRPRK) form a DNA-binding region, a.T hook 1. Arg26 carries the post-translational modification Asymmetric dimethylarginine; alternate. Arg26 carries the post-translational modification Omega-N-methylarginine; alternate. Arg26 carries the post-translational modification Symmetric dimethylarginine; alternate. At Ser36 the chain carries Phosphoserine; by HIPK2 and CDC2. 2 positions are modified to phosphothreonine: Thr39 and Val42. 2 positions are modified to phosphoserine: Ser44 and Ser49. The residue at position 53 (Thr53) is a Phosphothreonine; by HIPK2 and CDC2. Residues 53-63 (TPKRPRGRPKG) constitute a DNA-binding region (a.T hook 2). Residues 53 to 77 (TPKRPRGRPKGSKNKGAAKTRKTTT) are interaction with HIPK2. The segment covering 55-74 (KRPRGRPKGSKNKGAAKTRK) has biased composition (basic residues). Residues Arg58 and Arg60 each carry the asymmetric dimethylarginine; by PRMT6; alternate modification. An omega-N-methylarginine; by PRMT6; alternate mark is found at Arg58 and Arg60. A Phosphothreonine modification is found at Lys67. A Phosphothreonine; by HIPK2 and CDC2 modification is found at Thr78. The segment at residues 78–89 (TPGRKPRGRPKK) is a DNA-binding region (a.T hook 3). Positions 93–107 (EEEEGISQESSEEEQ) are enriched in acidic residues. Ser99 carries the post-translational modification Phosphoserine. 2 positions are modified to phosphoserine; by CK: Ser102 and Ser103.

The protein belongs to the HMGA family. As to quaternary structure, interacts with HIPK2. In terms of processing, constitutively phosphorylated on two or three sites. Hyperphosphorylated at early stages of apoptosis, followed by dephosphorylation and methylation, which coincides with chromatin condensation. Isoforms HMG-I and HMG-Y can be phosphorylated by HIPK2. Phosphorylation of HMG-I at Ser-36, Thr-53 and Thr-78 and of HMG-Y at Thr-42 and Thr-67 by HIPK2 modulates DNA-binding affinity. HMG-Y is not methylated. Post-translationally, methylation at Arg-58 is mutually exclusive with methylation at Arg-60.

Its subcellular location is the nucleus. The protein resides in the chromosome. HMG-I/Y bind preferentially to the minor groove of A+T rich regions in double-stranded DNA. It is suggested that these proteins could function in nucleosome phasing and in the 3'-end processing of mRNA transcripts. They are also involved in the transcription regulation of genes containing, or in close proximity to A+T-rich regions. The chain is High mobility group protein HMG-I/HMG-Y (HMGA1) from Homo sapiens (Human).